The primary structure comprises 65 residues: Alpha-toxin BeM10 (65 aa).

An LCN-type CS-alpha/beta domain is found at 2-65; sequence RDGYIADDKD…IKQKVSGKCN (64 aa). 4 disulfides stabilise this stretch: Cys-12-Cys-64, Cys-16-Cys-35, Cys-22-Cys-45, and Cys-26-Cys-47.

This sequence belongs to the long (4 C-C) scorpion toxin superfamily. Sodium channel inhibitor family. Alpha subfamily. Expressed by the venom gland.

It localises to the secreted. In terms of biological role, alpha toxins bind voltage-independently at site-3 of sodium channels (Nav) and inhibit the inactivation of the activated channels, thereby blocking neuronal transmission. Has paralytic activity in mice. This is Alpha-toxin BeM10 from Mesobuthus eupeus (Lesser Asian scorpion).